Consider the following 294-residue polypeptide: Pyridoxal 5'-phosphate synthase subunit PdxS (294 aa).

Position 24 (aspartate 24) interacts with D-ribose 5-phosphate. Lysine 81 functions as the Schiff-base intermediate with D-ribose 5-phosphate in the catalytic mechanism. Glycine 153 lines the D-ribose 5-phosphate pocket. D-glyceraldehyde 3-phosphate is bound at residue arginine 165. D-ribose 5-phosphate contacts are provided by residues glycine 214 and 235-236; that span reads GS.

The protein belongs to the PdxS/SNZ family. In terms of assembly, in the presence of PdxT, forms a dodecamer of heterodimers.

The catalysed reaction is aldehydo-D-ribose 5-phosphate + D-glyceraldehyde 3-phosphate + L-glutamine = pyridoxal 5'-phosphate + L-glutamate + phosphate + 3 H2O + H(+). It participates in cofactor biosynthesis; pyridoxal 5'-phosphate biosynthesis. Its function is as follows. Catalyzes the formation of pyridoxal 5'-phosphate from ribose 5-phosphate (RBP), glyceraldehyde 3-phosphate (G3P) and ammonia. The ammonia is provided by the PdxT subunit. Can also use ribulose 5-phosphate and dihydroxyacetone phosphate as substrates, resulting from enzyme-catalyzed isomerization of RBP and G3P, respectively. The protein is Pyridoxal 5'-phosphate synthase subunit PdxS of Bacillus pumilus (strain SAFR-032).